Here is a 715-residue protein sequence, read N- to C-terminus: ABC transporter F family member 3 (715 aa).

Threonine 2 is subject to N-acetylthreonine. The tract at residues 96-118 (VRMNDGMDDGPVKKKKPEPVDGP) is disordered. ABC transporter domains are found at residues 175 to 436 (IHMD…KNQQ) and 504 to 713 (ISFS…LLQS). Residues 207–214 (GRNGTGKT) and 537–544 (GPNGIGKS) contribute to the ATP site.

This sequence belongs to the ABC transporter superfamily. ABCF family. EF3 (TC 3.A.1.121) subfamily.

The chain is ABC transporter F family member 3 (ABCF3) from Arabidopsis thaliana (Mouse-ear cress).